We begin with the raw amino-acid sequence, 679 residues long: UvrABC system protein B (679 aa).

In terms of domain architecture, Helicase ATP-binding spans 25–176 (EGVNGGERYQ…NLRGSLRDLV (152 aa)). 38 to 45 (GATGTGKT) serves as a coordination point for ATP. Positions 91–114 (YYDYYQPEAYVPVSDTYIAKTASI) match the Beta-hairpin motif. The Helicase C-terminal domain maps to 429–591 (QVDDLLGEIR…ITPTAAGKKA (163 aa)). Residues 638–673 (PELIDQLELKMKESAKKLDFEEAANLRDRIKKLRQK) form the UVR domain.

It belongs to the UvrB family. In terms of assembly, forms a heterotetramer with UvrA during the search for lesions. Interacts with UvrC in an incision complex.

It localises to the cytoplasm. The UvrABC repair system catalyzes the recognition and processing of DNA lesions. A damage recognition complex composed of 2 UvrA and 2 UvrB subunits scans DNA for abnormalities. Upon binding of the UvrA(2)B(2) complex to a putative damaged site, the DNA wraps around one UvrB monomer. DNA wrap is dependent on ATP binding by UvrB and probably causes local melting of the DNA helix, facilitating insertion of UvrB beta-hairpin between the DNA strands. Then UvrB probes one DNA strand for the presence of a lesion. If a lesion is found the UvrA subunits dissociate and the UvrB-DNA preincision complex is formed. This complex is subsequently bound by UvrC and the second UvrB is released. If no lesion is found, the DNA wraps around the other UvrB subunit that will check the other stand for damage. The sequence is that of UvrABC system protein B from Synechococcus sp. (strain CC9311).